The sequence spans 266 residues: Energy-coupling factor transporter ATP-binding protein EcfA1 (266 aa).

In terms of domain architecture, ABC transporter spans 2 to 237 (IKLNNVTFRY…EKIIEIAKIA (236 aa)). ATP is bound at residue 37 to 44 (GHNGSGKS).

It belongs to the ABC transporter superfamily. Energy-coupling factor EcfA family. As to quaternary structure, forms a stable energy-coupling factor (ECF) transporter complex composed of 2 membrane-embedded substrate-binding proteins (S component), 2 ATP-binding proteins (A component) and 2 transmembrane proteins (T component).

It is found in the cell membrane. ATP-binding (A) component of a common energy-coupling factor (ECF) ABC-transporter complex. Unlike classic ABC transporters this ECF transporter provides the energy necessary to transport a number of different substrates. This Mycoplasmopsis synoviae (strain 53) (Mycoplasma synoviae) protein is Energy-coupling factor transporter ATP-binding protein EcfA1.